Reading from the N-terminus, the 180-residue chain is Crossover junction endodeoxyribonuclease RuvC (180 aa).

Active-site residues include aspartate 13, glutamate 73, and aspartate 145. Residues aspartate 13, glutamate 73, and aspartate 145 each coordinate Mg(2+).

It belongs to the RuvC family. As to quaternary structure, homodimer which binds Holliday junction (HJ) DNA. The HJ becomes 2-fold symmetrical on binding to RuvC with unstacked arms; it has a different conformation from HJ DNA in complex with RuvA. In the full resolvosome a probable DNA-RuvA(4)-RuvB(12)-RuvC(2) complex forms which resolves the HJ. The cofactor is Mg(2+).

It is found in the cytoplasm. It carries out the reaction Endonucleolytic cleavage at a junction such as a reciprocal single-stranded crossover between two homologous DNA duplexes (Holliday junction).. In terms of biological role, the RuvA-RuvB-RuvC complex processes Holliday junction (HJ) DNA during genetic recombination and DNA repair. Endonuclease that resolves HJ intermediates. Cleaves cruciform DNA by making single-stranded nicks across the HJ at symmetrical positions within the homologous arms, yielding a 5'-phosphate and a 3'-hydroxyl group; requires a central core of homology in the junction. The consensus cleavage sequence is 5'-(A/T)TT(C/G)-3'. Cleavage occurs on the 3'-side of the TT dinucleotide at the point of strand exchange. HJ branch migration catalyzed by RuvA-RuvB allows RuvC to scan DNA until it finds its consensus sequence, where it cleaves and resolves the cruciform DNA. The chain is Crossover junction endodeoxyribonuclease RuvC from Magnetococcus marinus (strain ATCC BAA-1437 / JCM 17883 / MC-1).